We begin with the raw amino-acid sequence, 372 residues long: Peptidyl-prolyl cis-trans isomerase D (372 aa).

One can recognise a PPIase cyclophilin-type domain in the interval 9–175 (FFDISIGGKP…KEVKIEDCGV (167 aa)). TPR repeat units follow at residues 220–253 (VEAV…LKQY), 271–304 (VSLF…DNTD), and 309–342 (AKAL…QPHD).

The protein belongs to the cyclophilin-type PPIase family. PPIase D subfamily.

It is found in the cytoplasm. It catalyses the reaction [protein]-peptidylproline (omega=180) = [protein]-peptidylproline (omega=0). PPIases accelerate the folding of proteins. It catalyzes the cis-trans isomerization of proline imidic peptide bonds in oligopeptides. This is Peptidyl-prolyl cis-trans isomerase D (CPR6) from Kluyveromyces lactis (strain ATCC 8585 / CBS 2359 / DSM 70799 / NBRC 1267 / NRRL Y-1140 / WM37) (Yeast).